The following is a 492-amino-acid chain: Cysteine--tRNA ligase (492 aa).

Cys-31 lines the Zn(2+) pocket. The short motif at 33–43 is the 'HIGH' region element; the sequence is PTVYGDPHLGH. Zn(2+) contacts are provided by Cys-226, His-251, and Glu-255. The short motif at 283–287 is the 'KMSKS' region element; that stretch reads KMGKS. ATP is bound at residue Lys-286.

Belongs to the class-I aminoacyl-tRNA synthetase family. Monomer. The cofactor is Zn(2+).

Its subcellular location is the cytoplasm. It catalyses the reaction tRNA(Cys) + L-cysteine + ATP = L-cysteinyl-tRNA(Cys) + AMP + diphosphate. The sequence is that of Cysteine--tRNA ligase from Azobacteroides pseudotrichonymphae genomovar. CFP2.